The chain runs to 525 residues: Peptide chain release factor 3 (525 aa).

The region spanning 9–276 is the tr-type G domain; it reads AKRRTFAIIS…GFTRYAPAPQ (268 aa). GTP contacts are provided by residues 18–25, 86–90, and 140–143; these read SHPDAGKT, DTPGH, and NKFD.

It belongs to the TRAFAC class translation factor GTPase superfamily. Classic translation factor GTPase family. PrfC subfamily.

It localises to the cytoplasm. In terms of biological role, increases the formation of ribosomal termination complexes and stimulates activities of RF-1 and RF-2. It binds guanine nucleotides and has strong preference for UGA stop codons. It may interact directly with the ribosome. The stimulation of RF-1 and RF-2 is significantly reduced by GTP and GDP, but not by GMP. This chain is Peptide chain release factor 3, found in Francisella tularensis subsp. mediasiatica (strain FSC147).